The chain runs to 78 residues: Large ribosomal subunit protein bL28 (78 aa).

This sequence belongs to the bacterial ribosomal protein bL28 family.

The protein is Large ribosomal subunit protein bL28 of Shigella boydii serotype 4 (strain Sb227).